The sequence spans 533 residues: Thromboxane-A synthase (533 aa).

Residues 1 to 10 (MEVLGLLKFE) are Cytoplasmic-facing. The chain crosses the membrane as a helical span at residues 11–31 (VSGTVVTVTLSVVLLALLKWY). Over 32-75 (STSAFSRLRKLGIRHPEPSPFVGNLMFFRQGFWESHLELRERYG) the chain is Lumenal. A helical transmembrane segment spans residues 76-96 (PLCGYYLGRRMYIVISDPDMI). The Cytoplasmic segment spans residues 97–223 (KEVLVENFSN…QRVFAFSTPR (127 aa)). A helical membrane pass occupies residues 224–244 (PLLALILSFPSIMVPLARILP). The Lumenal segment spans residues 245–335 (NKNRDELNGF…LTVDEIAGQA (91 aa)). Residues 336–356 (FLFLIAGHEITTNTLSFITYL) traverse the membrane as a helical segment. At 357–533 (LATHPECQER…NGVYVKIVSR (177 aa)) the chain is on the cytoplasmic side. Heme is bound at residue Cys-479.

Belongs to the cytochrome P450 family. Monomer. Heme serves as cofactor. As to expression, expressed in bone marrow, spleen, lung, thymus, liver, uterus, and macrophages.

Its subcellular location is the endoplasmic reticulum membrane. It catalyses the reaction prostaglandin H2 = thromboxane A2. It carries out the reaction prostaglandin H2 = (12S)-hydroxy-(5Z,8E,10E)-heptadecatrienoate + malonaldehyde. The catalysed reaction is a hydroperoxyeicosatetraenoate = an oxoeicosatetraenoate + H2O. The enzyme catalyses (15S)-hydroperoxy-(5Z,8Z,11Z,13E)-eicosatetraenoate = 15-oxo-(5Z,8Z,11Z,13E)-eicosatetraenoate + H2O. It catalyses the reaction (15S)-hydroperoxy-(5Z,8Z,11Z,13E)-eicosatetraenoate + AH2 = (15S)-hydroxy-(5Z,8Z,11Z,13E)-eicosatetraenoate + A + H2O. In terms of biological role, catalyzes the conversion of prostaglandin H2 (PGH2) to thromboxane A2 (TXA2), a potent inducer of blood vessel constriction and platelet aggregation. Also cleaves PGH2 to 12-hydroxy-heptadecatrienoicacid (12-HHT) and malondialdehyde, which is known to act as a mediator of DNA damage. 12-HHT and malondialdehyde are formed stoichiometrically in the same amounts as TXA2. Additionally, displays dehydratase activity, toward (15S)-hydroperoxy-(5Z,8Z,11Z,13E)-eicosatetraenoate (15(S)-HPETE) producing 15-KETE and 15-HETE. This is Thromboxane-A synthase (Tbxas1) from Rattus norvegicus (Rat).